The sequence spans 170 residues: Urease accessory protein UreE (170 aa).

It belongs to the UreE family.

Its subcellular location is the cytoplasm. Functionally, involved in urease metallocenter assembly. Binds nickel. Probably functions as a nickel donor during metallocenter assembly. The sequence is that of Urease accessory protein UreE from Helicobacter pylori (strain P12).